The following is a 120-amino-acid chain: MVDIVKRRDWEKKEKKKIAIERIDTLFTLAERVARYSPDLAKRYVELALEIQKKAKVKIPRKWKRRYCKRCHTFLIPGVNARVRLRTKRMPHVVITCLECGYIMRYPYLREVKQKRKKAT.

Zn(2+) contacts are provided by cysteine 68, cysteine 71, cysteine 97, and cysteine 100.

It belongs to the eukaryotic/archaeal RNase P protein component 4 family. Consists of a catalytic RNA component and at least 5 protein subunits. Forms a heterodimeric subcomplex with Rnp1. Reconstituted enzyme missing individual protein subunits is suboptimally active, showing each subunit contributes to optimization of activity. It depends on Zn(2+) as a cofactor.

It is found in the cytoplasm. The enzyme catalyses Endonucleolytic cleavage of RNA, removing 5'-extranucleotides from tRNA precursor.. Part of ribonuclease P, a protein complex that generates mature tRNA molecules by cleaving their 5'-ends. Binds RNase P RNA. The sequence is that of Ribonuclease P protein component 4 from Pyrococcus horikoshii (strain ATCC 700860 / DSM 12428 / JCM 9974 / NBRC 100139 / OT-3).